A 150-amino-acid polypeptide reads, in one-letter code: Large ribosomal subunit protein bL9 (150 aa).

It belongs to the bacterial ribosomal protein bL9 family.

Binds to the 23S rRNA. This is Large ribosomal subunit protein bL9 from Burkholderia mallei (strain NCTC 10247).